The chain runs to 304 residues: MELEQLKCFVAAAEELHFGRAAQKMGILPASLGRHLRLLEESLGTRLMSRTTRSVALTEDGVALLEEVRPLLHRLQTLAEEFRSRKTQQATVLRIGAIDSAAAGLIPPLLHDFRERFPGIITQLVEDKSIRLIPKLIAGRLDIVFIRPRDGLNRNLVVRTLTQETPVIALPVTHPLANRERISVDELREEPLIVPERRSRPHSYDLTMKLFEDAGLHPRIAQTADEKQTIINLVAAGIGSAIVPRWTAKLAVFGVTFVPLMTVGGISLRKLPLAAAWAKAVRDPGRDQLLELLDTNIDRYAEQA.

The 58-residue stretch at 1–58 folds into the HTH lysR-type domain; it reads MELEQLKCFVAAAEELHFGRAAQKMGILPASLGRHLRLLEESLGTRLMSRTTRSVALT. A DNA-binding region (H-T-H motif) is located at residues 18–37; sequence FGRAAQKMGILPASLGRHLR.

Belongs to the LysR transcriptional regulatory family.

Transcriptional regulator of the ttuABCDE tartrate utilization operon. This Agrobacterium vitis (Rhizobium vitis) protein is HTH-type transcriptional regulator TtuA (ttuA).